Consider the following 439-residue polypeptide: Glutamate--tRNA ligase 1 (439 aa).

The 'HIGH' region signature appears at 6 to 16; it reads PSPTGDMHIGN. Positions 232–236 match the 'KMSKS' region motif; the sequence is KMSKR. Lys-235 is an ATP binding site.

Belongs to the class-I aminoacyl-tRNA synthetase family. Glutamate--tRNA ligase type 1 subfamily. Monomer.

Its subcellular location is the cytoplasm. It catalyses the reaction tRNA(Glu) + L-glutamate + ATP = L-glutamyl-tRNA(Glu) + AMP + diphosphate. Catalyzes the attachment of glutamate to tRNA(Glu) in a two-step reaction: glutamate is first activated by ATP to form Glu-AMP and then transferred to the acceptor end of tRNA(Glu). This Helicobacter acinonychis (strain Sheeba) protein is Glutamate--tRNA ligase 1.